Consider the following 46-residue polypeptide: Mu-segestritoxin-Sf1c (46 aa).

4 disulfides stabilise this stretch: cysteine 3–cysteine 19, cysteine 10–cysteine 22, cysteine 18–cysteine 42, and cysteine 24–cysteine 40. The tract at residues 31–33 is keys region for toxin activity; it reads RPW.

This sequence belongs to the neurotoxin 16 (SFI) family. Expressed by the venom gland.

The protein resides in the secreted. In terms of biological role, insecticidal toxin. It inhibits insect voltage-gated sodium channels (Nav) by partially blocking the channel pore in DUM neurons from the American cockroach, not by acting as a gating modifier. The inhibition is only partially reversible after prolonged washout. In vivo, the toxin causes flaccid paralysis followed by death when injected into Heliothis virescens larvae. It also causes uncoordinated movements followed by full paralysis to sheep blowflies (Lucilia cuprina). When the toxin is fused to snowdrop lectin, it is orally active against larvae of the tomato moth (Laconobia oleracea), the rice brown planthopper (Nilaparvata lugens), and the peach-potato aphid (Myzus persicae). This chain is Mu-segestritoxin-Sf1c, found in Segestria florentina (Tube-web spider).